A 150-amino-acid polypeptide reads, in one-letter code: MAASQCLCCSKFLLQRQNLACFLTNPHCGSIINADGHGEVWTDWNNMSKFFQYGWRCTTNENAYSNRTLMGNWNQERYDLRNIVQPKPLPSQFGHYFETTYDTSYNNKMPLSTHRFKREPHCFPGHQPELDPPRYKCTEKSTYMNSYSKS.

Mn regions lie at residues 99–110 (TTYDTSYNNKMP) and 140–150 (KSTYMNSYSKS).

This sequence belongs to the CFAP68 family. In terms of assembly, microtubule inner protein component of sperm flagellar doublet microtubules.

The protein resides in the cytoplasm. Its subcellular location is the cytoskeleton. The protein localises to the cilium axoneme. It is found in the flagellum axoneme. It localises to the nucleus. The protein resides in the cell projection. Its subcellular location is the cilium. Microtubule inner protein (MIP) part of the dynein-decorated doublet microtubules (DMTs) in cilia axoneme, which is required for motile cilia beating. In Macaca fascicularis (Crab-eating macaque), this protein is Cilia- and flagella-associated protein 68 (CFAP68).